We begin with the raw amino-acid sequence, 371 residues long: Protein SOMBRERO (371 aa).

The region spanning 17–166 (VPPGFRFHPT…GWVVCRVFKK (150 aa)) is the NAC domain. The DNA-binding element occupies 118–172 (IGLRKTLVFYTGRAPHGQKTEWIMHEYRLDDSENEIQEDGWVVCRVFKKKNHFRG). 2 disordered regions span residues 176 to 213 (EQEQ…LILH) and 316 to 355 (VQNH…NQRF). Basic and acidic residues predominate over residues 192 to 201 (NDHDHHHHID). Low complexity-rich tracts occupy residues 202–213 (SNSNNHSPLILH) and 340–349 (GNNNGGSSSS).

As to expression, accumulates in maturing root cap cells, in both COL and LRC cells.

Its subcellular location is the nucleus. Its function is as follows. Transcription regulator. Together with BRN1 and BRN2, regulates cellular maturation of root cap. Represses stem cell-like divisions in the root cap daughter cells, and thus promotes daughter cell fate. Inhibits expression of its positive regulator FEZ in a feedback loop for controlled switches in cell division plane. Promotes the expression of genes involved in secondary cell walls (SCW) biosynthesis. This is Protein SOMBRERO (SMB) from Arabidopsis thaliana (Mouse-ear cress).